The primary structure comprises 477 residues: Exodeoxyribonuclease 7 large subunit (477 aa).

The segment at 456–477 (GGTVAPRKAPPKKPGGGQGSLL) is disordered.

Belongs to the XseA family. Heterooligomer composed of large and small subunits.

It localises to the cytoplasm. The catalysed reaction is Exonucleolytic cleavage in either 5'- to 3'- or 3'- to 5'-direction to yield nucleoside 5'-phosphates.. Bidirectionally degrades single-stranded DNA into large acid-insoluble oligonucleotides, which are then degraded further into small acid-soluble oligonucleotides. The protein is Exodeoxyribonuclease 7 large subunit of Parvibaculum lavamentivorans (strain DS-1 / DSM 13023 / NCIMB 13966).